Here is a 243-residue protein sequence, read N- to C-terminus: Type III pantothenate kinase (243 aa).

Position 7 to 14 (7 to 14 (DIGNTRLK)) interacts with ATP. Substrate contacts are provided by residues tyrosine 95 and 102-105 (GIDR). Aspartate 104 serves as the catalytic Proton acceptor. Threonine 126 provides a ligand contact to ATP. Threonine 177 lines the substrate pocket.

The protein belongs to the type III pantothenate kinase family. In terms of assembly, homodimer. The cofactor is NH4(+). It depends on K(+) as a cofactor.

It localises to the cytoplasm. The enzyme catalyses (R)-pantothenate + ATP = (R)-4'-phosphopantothenate + ADP + H(+). The protein operates within cofactor biosynthesis; coenzyme A biosynthesis; CoA from (R)-pantothenate: step 1/5. In terms of biological role, catalyzes the phosphorylation of pantothenate (Pan), the first step in CoA biosynthesis. The sequence is that of Type III pantothenate kinase from Acinetobacter baylyi (strain ATCC 33305 / BD413 / ADP1).